The sequence spans 209 residues: MRKGILGKKIGMTQVFDETGRAIPVTVIQAGPCVVIRKKETSTDGYDAVQVGFEPVKERKVNKPLLGYFNKAGVTPFRYIREFRLENSGEYQVGQEIKADVFSPGEKVDVTGISKGKGFAGGIKRHGFHRGPMEHGSKYHRRPGSLAAKGPARVFKGRRLPGHLGAVRVTVQGLEVVRNDPERNLLLIKGSVPGPRHGLLVIKNSVKGG.

This sequence belongs to the universal ribosomal protein uL3 family. As to quaternary structure, part of the 50S ribosomal subunit. Forms a cluster with proteins L14 and L19.

Its function is as follows. One of the primary rRNA binding proteins, it binds directly near the 3'-end of the 23S rRNA, where it nucleates assembly of the 50S subunit. The polypeptide is Large ribosomal subunit protein uL3 (Moorella thermoacetica (strain ATCC 39073 / JCM 9320)).